Here is a 272-residue protein sequence, read N- to C-terminus: Prohibitin 1 (272 aa).

The residue at position 2 (A2) is an N-acetylalanine. T91 is subject to Phosphothreonine. K128 and K186 each carry N6-acetyllysine. Positions 177–211 form a coiled coil; it reads KEFTEAVEAKQVAQQEAERARFVVEKAEQQKKAAI. K202 carries the N6-acetyllysine; alternate modification. K202 carries the post-translational modification N6-succinyllysine; alternate. Y249 carries the post-translational modification Phosphotyrosine.

The protein belongs to the prohibitin family. As to quaternary structure, the mitochondrial prohibitin complex consists of two subunits (PHB1 and PHB2), assembled into a membrane-associated ring-shaped supercomplex of approximately 1 mDa. Interacts with STOML2. Interacts with MAP1LC3B (membrane-bound form LC3-II); the interaction requires PHB2 and takes place upon Parkin-mediated mitochondrial damage. Interacts with STAT3 (unphosphorylated or phosphorylated at 'Ser-727'). Interacts with CLPB. Interacts with CD86 (via cytoplasmic domain); the interactions increases after priming with CD40.

Its subcellular location is the mitochondrion inner membrane. The protein resides in the nucleus. The protein localises to the cytoplasm. It localises to the cell membrane. Its function is as follows. Protein with pleiotropic attributes mediated in a cell-compartment- and tissue-specific manner, which include the plasma membrane-associated cell signaling functions, mitochondrial chaperone, and transcriptional co-regulator of transcription factors in the nucleus. Plays a role in adipose tissue and glucose homeostasis in a sex-specific manner. Contributes to pulmonary vascular remodeling by accelerating proliferation of pulmonary arterial smooth muscle cells. In terms of biological role, in the mitochondria, together with PHB2, forms large ring complexes (prohibitin complexes) in the inner mitochondrial membrane (IMM) and functions as a chaperone protein that stabilizes mitochondrial respiratory enzymes and maintains mitochondrial integrity in the IMM, which is required for mitochondrial morphogenesis, neuronal survival, and normal lifespan. The prohibitin complex, with DNAJC19, regulates cardiolipin remodeling and the protein turnover of OMA1 in a cardiolipin-binding manner. Regulates mitochondrial respiration activity playing a role in cellular aging. The prohibitin complex plays a role of mitophagy receptor involved in targeting mitochondria for autophagic degradation. Involved in mitochondrial-mediated antiviral innate immunity, activates RIG-I-mediated signal transduction and production of IFNB1 and proinflammatory cytokine IL6. Functionally, in the nucleus, acts as a transcription coregulator, enhances promoter binding by TP53, a transcription factor it activates, but reduces the promoter binding by E2F1, a transcription factor it represses. Interacts with STAT3 to affect IL17 secretion in T-helper Th17 cells. In the plasma membrane, cooperates with CD86 to mediate CD86-signaling in B lymphocytes that regulates the level of IgG1 produced through the activation of distal signaling intermediates. Upon CD40 engagement, required to activate NF-kappa-B signaling pathway via phospholipase C and protein kinase C activation. This Bos taurus (Bovine) protein is Prohibitin 1 (PHB1).